Reading from the N-terminus, the 530-residue chain is MIAWTRFRERPWSGPALALIAGLAAALAHPPFGVLPGLLGYAGLLHLLDNADVQRPLRSVFWRGWLAGVGYFGLGTWWVGEAFLVDAATHGWMAPFAVTGMAAGLALFWGLAALLYRALRPASAWRVLTFAGAFAALEWMRGHVLTGFPWNLPGETWKAGSAPSQLAALVGAYGLTWITLAIAGAPAVWRQGRGGRAATGLAVASLIGLYGYGAIALSRPLSPSGPTTVRIVQADIKQDLKWDAERFAQIVQAYVSLTATPYAAKPADIVIWPEGALPAAVNDYLAPGTWVRQAIVDSLAPGQLLLIGGYRYEGAGPHPTYYNSLVALRRTETDLELVGIYDKHRLVPFGEYLPADRFLTVIGFKSLARLSDNFTTGPTPAPLRISPELLVQPLICYESLFPGLAKPDPNVRALINVSNDAWFGVTSGPPQHLNLASYRAIESAKPILRATPTGISAVVDARGRIVPGASLGLGESGVIDAQIPGMGQVTPYDNFGDVAFLALILISGVVSARVRIGKISSSIAPKRKLS.

Transmembrane regions (helical) follow at residues 19-39, 65-85, 96-116, 128-148, 169-189, and 197-217; these read LIAG…PGLL, WLAG…AFLV, FAVT…ALLY, LTFA…LTGF, LVGA…PAVW, and AATG…AIAL. Residues 232-485 form the CN hydrolase domain; sequence VQADIKQDLK…SGVIDAQIPG (254 aa). The active-site Proton acceptor is the E274. Residue K343 is part of the active site. The active-site Nucleophile is C396.

Belongs to the CN hydrolase family. Apolipoprotein N-acyltransferase subfamily.

It localises to the cell inner membrane. It carries out the reaction N-terminal S-1,2-diacyl-sn-glyceryl-L-cysteinyl-[lipoprotein] + a glycerophospholipid = N-acyl-S-1,2-diacyl-sn-glyceryl-L-cysteinyl-[lipoprotein] + a 2-acyl-sn-glycero-3-phospholipid + H(+). It functions in the pathway protein modification; lipoprotein biosynthesis (N-acyl transfer). Functionally, catalyzes the phospholipid dependent N-acylation of the N-terminal cysteine of apolipoprotein, the last step in lipoprotein maturation. The sequence is that of Apolipoprotein N-acyltransferase from Caulobacter vibrioides (strain ATCC 19089 / CIP 103742 / CB 15) (Caulobacter crescentus).